Here is a 141-residue protein sequence, read N- to C-terminus: 3-hydroxyacyl-[acyl-carrier-protein] dehydratase FabZ (141 aa).

The active site involves His-48.

It belongs to the thioester dehydratase family. FabZ subfamily.

It is found in the cytoplasm. The catalysed reaction is a (3R)-hydroxyacyl-[ACP] = a (2E)-enoyl-[ACP] + H2O. In terms of biological role, involved in unsaturated fatty acids biosynthesis. Catalyzes the dehydration of short chain beta-hydroxyacyl-ACPs and long chain saturated and unsaturated beta-hydroxyacyl-ACPs. The sequence is that of 3-hydroxyacyl-[acyl-carrier-protein] dehydratase FabZ from Streptococcus thermophilus (strain CNRZ 1066).